A 24-amino-acid chain; its full sequence is Brevinin-1HSa (24 aa).

Residues cysteine 18 and cysteine 24 are joined by a disulfide bond.

As to expression, expressed by the skin glands.

It localises to the secreted. Its function is as follows. Has antibacterial activity against the Gram-positive bacterium S.aureus ATCC 25923 (MIC=3 uM) and the Gram-negative bacterium E.coli ATCC 25726 (MIC=24 uM). The sequence is that of Brevinin-1HSa from Odorrana hosii (Hose's rock frog).